Here is a 473-residue protein sequence, read N- to C-terminus: UDP-N-acetylmuramate--L-alanine ligase (473 aa).

An ATP-binding site is contributed by 112-118 (GTHGKTT).

It belongs to the MurCDEF family.

Its subcellular location is the cytoplasm. The enzyme catalyses UDP-N-acetyl-alpha-D-muramate + L-alanine + ATP = UDP-N-acetyl-alpha-D-muramoyl-L-alanine + ADP + phosphate + H(+). Its pathway is cell wall biogenesis; peptidoglycan biosynthesis. Its function is as follows. Cell wall formation. This Nitrosomonas eutropha (strain DSM 101675 / C91 / Nm57) protein is UDP-N-acetylmuramate--L-alanine ligase.